Here is a 216-residue protein sequence, read N- to C-terminus: Thiopurine S-methyltransferase (216 aa).

Tryptophan 10, leucine 45, glutamate 66, and arginine 123 together coordinate S-adenosyl-L-methionine.

Belongs to the class I-like SAM-binding methyltransferase superfamily. TPMT family.

It is found in the cytoplasm. It catalyses the reaction S-adenosyl-L-methionine + a thiopurine = S-adenosyl-L-homocysteine + a thiopurine S-methylether.. This chain is Thiopurine S-methyltransferase, found in Pseudomonas putida (strain ATCC 47054 / DSM 6125 / CFBP 8728 / NCIMB 11950 / KT2440).